A 317-amino-acid polypeptide reads, in one-letter code: Egg-laying defective protein 26 (317 aa).

Residues 156–277 (EVNVSGVKFY…CSTGVPFSYD (122 aa)) form the LRAT domain. Catalysis depends on residues His-166 and His-178. Cys-261 functions as the Acyl-thioester intermediate in the catalytic mechanism.

Highly expressed in the cells of the spermatheca, the mouth, and the lining of the pharynx, the rectum, and the excretory canal. Also expressed in the pharyngeal intestinal junction cell.

The protein resides in the apical cell membrane. Its function is as follows. Putative acyltransferase. Plays a role in the morphogenesis of a vulval toroid cell, vulF, which is located where the vulva and the uterus connect. Not required for specifying vulval cell fate. This Caenorhabditis elegans protein is Egg-laying defective protein 26.